Consider the following 539-residue polypeptide: Protein peanut (539 aa).

Residues S6 and S13 each carry the phosphoserine modification. Residues 29 to 90 (LRDKQQAASA…GASNGDSNKL (62 aa)) form a disordered region. Positions 35–54 (AASASASSATNGSSGSESLV) are enriched in low complexity. The Septin-type G domain occupies 139–411 (RGFEFTLMVV…ENYRCRKLSE (273 aa)). A G1 motif region spans residues 149-156 (GASGLGKS). Residues 149-156 (GASGLGKS), T183, G209, 288-296 (KADTMTPDE), G345, and R360 each bind GTP. The segment at 206–209 (DTPG) is G3 motif. The interval 287–290 (AKAD) is G4 motif. The stretch at 420–516 (RLSNKNPLTQ…HVTLEELKRR (97 aa)) forms a coiled coil. Residues 513-539 (LKRRSLGANSSTDNVDGKKEKKKKGLF) form a disordered region. A Phosphoserine modification is found at S517.

Belongs to the TRAFAC class TrmE-Era-EngA-EngB-Septin-like GTPase superfamily. Septin GTPase family. Likely part of a multicomponent septin complex that includes Septin1. Interacts with Septin1. Interacts with hil. Interacts with park. Ubiquitinated by park, leading to its degradation by the proteasome. Accumulates at the leading edge of the cleavage furrow in dividing cells and cellularizing embryos (at protein level).

The protein resides in the apical cell membrane. The protein localises to the cleavage furrow. It localises to the cytoplasm. Its subcellular location is the cell cortex. In terms of biological role, involved in cytokinesis and possibly cellularization. Also acts as an enhancer of the sina gene, thus having a role in photoreceptor development. May be involved in p53-dependent apoptosis. This chain is Protein peanut (pnut), found in Drosophila melanogaster (Fruit fly).